A 109-amino-acid chain; its full sequence is MGMKIIAGDDVIVISGKDKGKMGKVIKVLKKKHCGKDVSFAIVSGVNVCRKSVKATQKSDGGIISVEKPINLSNIALFDSTLGIQTRVGYKFIGEKKVRFMKSSGKVIE.

This sequence belongs to the universal ribosomal protein uL24 family. Part of the 50S ribosomal subunit.

One of two assembly initiator proteins, it binds directly to the 5'-end of the 23S rRNA, where it nucleates assembly of the 50S subunit. Its function is as follows. One of the proteins that surrounds the polypeptide exit tunnel on the outside of the subunit. This Ehrlichia chaffeensis (strain ATCC CRL-10679 / Arkansas) protein is Large ribosomal subunit protein uL24.